Reading from the N-terminus, the 146-residue chain is MGNRLIRSYLPNTVMSIEDKQNKYNETIEDSKICNKVYIKQSGKIDKQELTRIKKLGFFYSQKSDHEIERMLFSMPNGTFLLTDDATNENIFIVQKDLENGSLNIAKLEFKGKALYINGKDYYSLENYLKTFEDFYKYPLIYNKNK.

It belongs to the asfivirus MGF 100 family.

Its function is as follows. Plays a role in virus cell tropism, and may be required for efficient virus replication in macrophages. This chain is Protein MGF 100-3L, found in Ornithodoros (relapsing fever ticks).